A 317-amino-acid chain; its full sequence is MKKLTSNDVTPEEIFYQRRKIIKAFGLSAVATALPTFSFAQESSDLKALEYKKSTESTLILTPENKVTGYNNFYEFGVDKGSPAHYAKKFQVNPWKLEIGGEVENPFTLNYDQLFTQFPLEERIYRFRCVEAWAMVVPWIGFELNKLLEKAKPTSKAKYVVFHTLYDPEQMPGQKNHFFGGGIHYPYVEALTLAEAMHSLTLMSVGLYGKALAPQNGAPIRLVVPWKYGFKSIKSIVKITLSETRPRTTWESLAPNEYGFYANVNPKVDHPRWSQASERVIGAGGLLRVKRQPTLMFNGYEREVAHLYKGLDLRINY.

A signal peptide (tat-type signal) is located at residues 1–40 (MKKLTSNDVTPEEIFYQRRKIIKAFGLSAVATALPTFSFA). Residues Asn-71, 74–75 (YE), Cys-129, Thr-164, Asn-216, Arg-221, and 232–234 (SIK) each bind Mo-molybdopterin.

This sequence belongs to the MsrP family. As to quaternary structure, heterodimer of a catalytic subunit (MsrP) and a heme-binding subunit (MsrQ). Mo-molybdopterin is required as a cofactor. In terms of processing, predicted to be exported by the Tat system. The position of the signal peptide cleavage has not been experimentally proven.

The protein resides in the periplasm. The catalysed reaction is L-methionyl-[protein] + a quinone + H2O = L-methionyl-(S)-S-oxide-[protein] + a quinol. It catalyses the reaction L-methionyl-[protein] + a quinone + H2O = L-methionyl-(R)-S-oxide-[protein] + a quinol. Functionally, part of the MsrPQ system that repairs oxidized periplasmic proteins containing methionine sulfoxide residues (Met-O), using respiratory chain electrons. Thus protects these proteins from oxidative-stress damage caused by reactive species of oxygen and chlorine generated by the host defense mechanisms. MsrPQ is essential for the maintenance of envelope integrity under bleach stress, rescuing a wide series of structurally unrelated periplasmic proteins from methionine oxidation. The catalytic subunit MsrP is non-stereospecific, being able to reduce both (R-) and (S-) diastereoisomers of methionine sulfoxide. This chain is Protein-methionine-sulfoxide reductase catalytic subunit MsrP, found in Histophilus somni (strain 2336) (Haemophilus somnus).